A 500-amino-acid chain; its full sequence is 5-taurinomethyluridine-[tRNA] synthase subunit GTPB3, mitochondrial (500 aa).

The N-terminal 73 residues, 1 to 73 (MHFISCCLRR…RRLTRSLPAP (73 aa)), are a transit peptide targeting the mitochondrion. 3 residues coordinate 5,10-methylenetetrahydrofolate: arginine 53, glutamate 111, and lysine 151. Residues 248 to 422 (GVHVVIAGST…LLTLLHNTLK (175 aa)) enclose the TrmE-type G domain. Residues 255 to 262 (GSTNAGKS), 281 to 285 (GTTRD), 302 to 305 (DTAG), and 373 to 376 (NESD) each bind GTP. Residue asparagine 258 coordinates K(+). Residues serine 262 and threonine 283 each coordinate Mg(2+). Lysine 500 is a 5,10-methylenetetrahydrofolate binding site.

Belongs to the TRAFAC class TrmE-Era-EngA-EngB-Septin-like GTPase superfamily. TrmE GTPase family. The cofactor is K(+).

The protein resides in the mitochondrion. The catalysed reaction is GTP + H2O = GDP + phosphate + H(+). Functionally, GTPase component of the GTPBP3-MTO1 complex that catalyzes the 5-taurinomethyluridine (taum(5)U) modification at the 34th wobble position (U34) of mitochondrial tRNAs (mt-tRNAs), which plays a role in mt-tRNA decoding and mitochondrial translation. Taum(5)U formation on mammalian mt-tRNA requires the presence of both GTPBP3-mediated GTPase activity and MTO1 catalytic activity. This Danio rerio (Zebrafish) protein is 5-taurinomethyluridine-[tRNA] synthase subunit GTPB3, mitochondrial (gtpbp3).